We begin with the raw amino-acid sequence, 537 residues long: MAKIIEYDEEARQGMLAGLDKLADTVKVTLGPKGRNVVLDKTYGAPTITNDGVSIAKEIDLEDPFERIGAELVKEVAKRTDDVAGDGTTTATVLAQSLVHEGLKNVVAGSNPIALRRGIEKASDALVKQLVASAKPVETKEQIAATATISAGDPEVGEKIAEALDKVGQDGVVTVEDNNRFGLDLDFTEGMRFDKGYISPYFVTNAEDQTAVLDDPYILLTSSKVSSQQDVVHIAELVMKTGKPLLIVAEDVDGEALPTLILNNIRGTFKSCAVKAPGFGDRRKAMLQDMAILTGGQVVSEDLGLKLDSIDLSVFGTAKKVIVSKDETTIVSGGGSKEDVAARVAQIRAEIEKTDSDYDREKLQERLAKLAGGVAVIKVGAATEVEAKERKHRIEDAVRNAKAAIEEGLVPGGGVALVQAAEKVEKDFNLEGDEATGAAIVFSGIEAPIKQIAENAGLSGAVVIDKVRSLPEGEGFNAATDTYEDLMAAGVTDPVKVTRSALQNAASIAGLFLTTEAVVANKPEPAAAPAAGQDMGY.

Residues threonine 29 to proline 32, aspartate 86 to threonine 90, glycine 413, asparagine 477 to alanine 479, and aspartate 493 contribute to the ATP site.

It belongs to the chaperonin (HSP60) family. In terms of assembly, forms a cylinder of 14 subunits composed of two heptameric rings stacked back-to-back. Interacts with the co-chaperonin GroES.

Its subcellular location is the cytoplasm. The catalysed reaction is ATP + H2O + a folded polypeptide = ADP + phosphate + an unfolded polypeptide.. Functionally, together with its co-chaperonin GroES, plays an essential role in assisting protein folding. The GroEL-GroES system forms a nano-cage that allows encapsulation of the non-native substrate proteins and provides a physical environment optimized to promote and accelerate protein folding. The polypeptide is Chaperonin GroEL (Bifidobacterium animalis subsp. lactis (strain AD011)).